A 173-amino-acid chain; its full sequence is RNA pyrophosphohydrolase (173 aa).

The region spanning 11–164 (PYRKCVGILV…KKHVYTQVVK (154 aa)) is the Nudix hydrolase domain. The Nudix box motif lies at 52–73 (GGINQGEKPIDAARRELYEETG).

It belongs to the Nudix hydrolase family. RppH subfamily. Requires a divalent metal cation as cofactor.

Its function is as follows. Accelerates the degradation of transcripts by removing pyrophosphate from the 5'-end of triphosphorylated RNA, leading to a more labile monophosphorylated state that can stimulate subsequent ribonuclease cleavage. In Bartonella clarridgeiae, this protein is RNA pyrophosphohydrolase.